Consider the following 156-residue polypeptide: MNVIGLDPGLNHTGWGILSIEKDIKLIGNGVIKTNNKETPGQRLNKIHKELINILNSYQINSASMEEVFINKNPRSSISLCYARGVLLLTLNAMNIQVFEYSSNYVKKSITGNGHAKKEQVHFMVEKILNVEFKGTYDISDAIAVALCHAYSKNNF.

Catalysis depends on residues Asp-7, Glu-66, and Asp-138. Residues Asp-7, Glu-66, and Asp-138 each coordinate Mg(2+).

The protein belongs to the RuvC family. Homodimer which binds Holliday junction (HJ) DNA. The HJ becomes 2-fold symmetrical on binding to RuvC with unstacked arms; it has a different conformation from HJ DNA in complex with RuvA. In the full resolvosome a probable DNA-RuvA(4)-RuvB(12)-RuvC(2) complex forms which resolves the HJ. Requires Mg(2+) as cofactor.

It is found in the cytoplasm. It carries out the reaction Endonucleolytic cleavage at a junction such as a reciprocal single-stranded crossover between two homologous DNA duplexes (Holliday junction).. In terms of biological role, the RuvA-RuvB-RuvC complex processes Holliday junction (HJ) DNA during genetic recombination and DNA repair. Endonuclease that resolves HJ intermediates. Cleaves cruciform DNA by making single-stranded nicks across the HJ at symmetrical positions within the homologous arms, yielding a 5'-phosphate and a 3'-hydroxyl group; requires a central core of homology in the junction. The consensus cleavage sequence is 5'-(A/T)TT(C/G)-3'. Cleavage occurs on the 3'-side of the TT dinucleotide at the point of strand exchange. HJ branch migration catalyzed by RuvA-RuvB allows RuvC to scan DNA until it finds its consensus sequence, where it cleaves and resolves the cruciform DNA. In Ehrlichia canis (strain Jake), this protein is Crossover junction endodeoxyribonuclease RuvC.